The following is a 311-amino-acid chain: DNA-directed RNA polymerase subunit alpha (311 aa).

Residues 1 to 228 (MQYQIERIDH…ELFQPLATVT (228 aa)) form an alpha N-terminal domain (alpha-NTD) region. An alpha C-terminal domain (alpha-CTD) region spans residues 239–311 (PSPEAQIPLE…ISIPQSRTSV (73 aa)).

This sequence belongs to the RNA polymerase alpha chain family. In terms of assembly, in cyanobacteria the RNAP catalytic core is composed of 2 alpha, 1 beta, 1 beta', 1 gamma and 1 omega subunit. When a sigma factor is associated with the core the holoenzyme is formed, which can initiate transcription.

The enzyme catalyses RNA(n) + a ribonucleoside 5'-triphosphate = RNA(n+1) + diphosphate. Its function is as follows. DNA-dependent RNA polymerase catalyzes the transcription of DNA into RNA using the four ribonucleoside triphosphates as substrates. In Prochlorococcus marinus (strain MIT 9312), this protein is DNA-directed RNA polymerase subunit alpha.